Reading from the N-terminus, the 280-residue chain is Small ribosomal subunit protein uS2 (280 aa).

This sequence belongs to the universal ribosomal protein uS2 family.

The sequence is that of Small ribosomal subunit protein uS2 from Desulforapulum autotrophicum (strain ATCC 43914 / DSM 3382 / VKM B-1955 / HRM2) (Desulfobacterium autotrophicum).